Consider the following 342-residue polypeptide: Holliday junction branch migration complex subunit RuvB (342 aa).

The tract at residues methionine 1 to tyrosine 184 is large ATPase domain (RuvB-L). ATP is bound by residues leucine 23, arginine 24, glycine 65, lysine 68, threonine 69, threonine 70, glutamate 131–tyrosine 133, arginine 174, tyrosine 184, and arginine 221. Threonine 69 contributes to the Mg(2+) binding site. Positions aspartate 185–asparagine 255 are small ATPAse domain (RuvB-S). A head domain (RuvB-H) region spans residues lysine 258–aspartate 342. DNA is bound by residues arginine 313 and arginine 318.

This sequence belongs to the RuvB family. As to quaternary structure, homohexamer. Forms an RuvA(8)-RuvB(12)-Holliday junction (HJ) complex. HJ DNA is sandwiched between 2 RuvA tetramers; dsDNA enters through RuvA and exits via RuvB. An RuvB hexamer assembles on each DNA strand where it exits the tetramer. Each RuvB hexamer is contacted by two RuvA subunits (via domain III) on 2 adjacent RuvB subunits; this complex drives branch migration. In the full resolvosome a probable DNA-RuvA(4)-RuvB(12)-RuvC(2) complex forms which resolves the HJ.

Its subcellular location is the cytoplasm. The enzyme catalyses ATP + H2O = ADP + phosphate + H(+). Functionally, the RuvA-RuvB-RuvC complex processes Holliday junction (HJ) DNA during genetic recombination and DNA repair, while the RuvA-RuvB complex plays an important role in the rescue of blocked DNA replication forks via replication fork reversal (RFR). RuvA specifically binds to HJ cruciform DNA, conferring on it an open structure. The RuvB hexamer acts as an ATP-dependent pump, pulling dsDNA into and through the RuvAB complex. RuvB forms 2 homohexamers on either side of HJ DNA bound by 1 or 2 RuvA tetramers; 4 subunits per hexamer contact DNA at a time. Coordinated motions by a converter formed by DNA-disengaged RuvB subunits stimulates ATP hydrolysis and nucleotide exchange. Immobilization of the converter enables RuvB to convert the ATP-contained energy into a lever motion, pulling 2 nucleotides of DNA out of the RuvA tetramer per ATP hydrolyzed, thus driving DNA branch migration. The RuvB motors rotate together with the DNA substrate, which together with the progressing nucleotide cycle form the mechanistic basis for DNA recombination by continuous HJ branch migration. Branch migration allows RuvC to scan DNA until it finds its consensus sequence, where it cleaves and resolves cruciform DNA. The protein is Holliday junction branch migration complex subunit RuvB of Bacteroides fragilis (strain ATCC 25285 / DSM 2151 / CCUG 4856 / JCM 11019 / LMG 10263 / NCTC 9343 / Onslow / VPI 2553 / EN-2).